A 243-amino-acid chain; its full sequence is Ornithine decarboxylase antizyme 3 (243 aa).

Ser6, Ser9, and Ser12 each carry phosphoserine.

This sequence belongs to the ODC antizyme family. As to quaternary structure, interacts with ODC1 and thereby sterically blocks ODC homodimerization. Interacts with AZIN2; this interaction disrupts the interaction between the antizyme and ODC1. Interacts with GGN. Testis specific. Expressed throughout the differentiation process from spermatids to spermatozoa in the inner part of the seminiferous tubules.

The protein resides in the nucleus. The protein localises to the cytoplasm. In terms of biological role, ornithine decarboxylase (ODC) antizyme protein that negatively regulates ODC activity and intracellular polyamine biosynthesis and uptake in response to increased intracellular polyamine levels. Binds to ODC monomers, inhibiting the assembly of the functional ODC homodimers. Does not target the ODC monomers for degradation, which allows a protein synthesis-independent restoration of ODC activity. Stabilizes AZIN2 by interfering with its ubiquitination. Involved in the translocation of AZNI2 from ER-Golgi intermediate compartment (ERGIC) to the cytosol. Probably plays a key role in spermatogenesis by regulating the intracellular concentration of polyamines in haploid germ cells. The protein is Ornithine decarboxylase antizyme 3 (Oaz3) of Mus musculus (Mouse).